The primary structure comprises 483 residues: tRNA sulfurtransferase (483 aa).

The THUMP domain occupies 62–166 (PQICDALTRV…QDKLTLIKAR (105 aa)). ATP contacts are provided by residues 184-185 (LI), K266, G288, and Q297. The cysteines at positions 345 and 457 are disulfide-linked. Residues 405 to 483 (LADTDVLLDI…GYTNVKVYRP (79 aa)) enclose the Rhodanese domain. C457 serves as the catalytic Cysteine persulfide intermediate.

The protein belongs to the ThiI family.

Its subcellular location is the cytoplasm. It catalyses the reaction [ThiI sulfur-carrier protein]-S-sulfanyl-L-cysteine + a uridine in tRNA + 2 reduced [2Fe-2S]-[ferredoxin] + ATP + H(+) = [ThiI sulfur-carrier protein]-L-cysteine + a 4-thiouridine in tRNA + 2 oxidized [2Fe-2S]-[ferredoxin] + AMP + diphosphate. The catalysed reaction is [ThiS sulfur-carrier protein]-C-terminal Gly-Gly-AMP + S-sulfanyl-L-cysteinyl-[cysteine desulfurase] + AH2 = [ThiS sulfur-carrier protein]-C-terminal-Gly-aminoethanethioate + L-cysteinyl-[cysteine desulfurase] + A + AMP + 2 H(+). It functions in the pathway cofactor biosynthesis; thiamine diphosphate biosynthesis. Functionally, catalyzes the ATP-dependent transfer of a sulfur to tRNA to produce 4-thiouridine in position 8 of tRNAs, which functions as a near-UV photosensor. Also catalyzes the transfer of sulfur to the sulfur carrier protein ThiS, forming ThiS-thiocarboxylate. This is a step in the synthesis of thiazole, in the thiamine biosynthesis pathway. The sulfur is donated as persulfide by IscS. In Yersinia enterocolitica serotype O:8 / biotype 1B (strain NCTC 13174 / 8081), this protein is tRNA sulfurtransferase.